A 398-amino-acid chain; its full sequence is Meiosis-specific protein SPO11 (398 aa).

Residues 40-175 (CSNADVLAHI…LNIIPAQKGL (136 aa)) form the Topo IIA-type catalytic domain. The O-(5'-phospho-DNA)-tyrosine intermediate role is filled by Tyr135. Mg(2+) contacts are provided by Glu233 and Asp288.

This sequence belongs to the TOP6A family. Requires Mg(2+) as cofactor.

It is found in the nucleus. It localises to the chromosome. The catalysed reaction is ATP-dependent breakage, passage and rejoining of double-stranded DNA.. Its function is as follows. Required for meiotic recombination. Mediates DNA cleavage that forms the double-strand breaks (DSB) that initiate meiotic recombination. The action of SPO11 is important in setting off a regulatory chain of events encompassing 5' to 3' resection. When there are no SPO11-DSBs, resection of a site specific VDE-DSB takes place but it is faster than in wild-type meiosis and increases the risk of uncovering flanking homology. The protein is Meiosis-specific protein SPO11 (SPO11) of Saccharomyces cerevisiae (strain ATCC 204508 / S288c) (Baker's yeast).